Here is a 124-residue protein sequence, read N- to C-terminus: Cytochrome b5-like protein (124 aa).

A helical membrane pass occupies residues 5–22 (YLLILIIIYVIKIICRYF). The Cytochrome b5 heme-binding domain maps to 49 to 124 (NQINQVNQVN…ILSKYKITEK (76 aa)). 2 residues coordinate heme: His84 and His108.

This sequence belongs to the cytochrome b5 family.

It is found in the membrane. Functionally, membrane bound hemoprotein which function as an electron carrier for several membrane bound oxygenases. This is Cytochrome b5-like protein from Acanthamoeba polyphaga (Amoeba).